Here is a 72-residue protein sequence, read N- to C-terminus: Translation initiation factor IF-1 1 (72 aa).

The region spanning 1-72 (MSKDDVIQMA…TRARIIFRAK (72 aa)) is the S1-like domain.

The protein belongs to the IF-1 family. As to quaternary structure, component of the 30S ribosomal translation pre-initiation complex which assembles on the 30S ribosome in the order IF-2 and IF-3, IF-1 and N-formylmethionyl-tRNA(fMet); mRNA recruitment can occur at any time during PIC assembly.

It is found in the cytoplasm. Functionally, one of the essential components for the initiation of protein synthesis. Stabilizes the binding of IF-2 and IF-3 on the 30S subunit to which N-formylmethionyl-tRNA(fMet) subsequently binds. Helps modulate mRNA selection, yielding the 30S pre-initiation complex (PIC). Upon addition of the 50S ribosomal subunit IF-1, IF-2 and IF-3 are released leaving the mature 70S translation initiation complex. The sequence is that of Translation initiation factor IF-1 1 from Polynucleobacter asymbioticus (strain DSM 18221 / CIP 109841 / QLW-P1DMWA-1) (Polynucleobacter necessarius subsp. asymbioticus).